The primary structure comprises 478 residues: MATTLFRLAGRNAKRHCMRQSTTIAHNLNSTRAFSASALRRYAEPSYEGQGTRLVPTGDDFAPNNDLYGLEALKADGAPRVPPQDHILARKVRHYTVNFGPQHPAAHGVLRLILELKGEEIVRADPHVGLLHRGTEKLCEYRTYLQALPYFDRLDYVSMMTNEQCFALAVEKLLNVEIPERAKWIRTMFAEITRILNHLMSVLSHAMDVGALTPFLWGFEEREKLMEFYERVSGARLHAAYVRPGGVHQDIPLGLLDDIYMWATQFGDRIDETEEMLTDNRIWIDRLRGIGVVSAADALNLSFTGVMLRGSGVPWDIRKSQPYDAYDQVEFDVPVGINGDCYDRYLCRMEEFRQSLRIIHQCLNKMPAGPVRVEDYKISPPPRSAMKENMEALIHHFLLYTKGYAVPPGDTYSAIEAPKGEMGVYVVSDGSERPYRVHIRAPGFAHLGGFDHLSRGHMLADAVAVIGTMDLVFGEVDR.

Residues 1 to 42 constitute a mitochondrion transit peptide; the sequence is MATTLFRLAGRNAKRHCMRQSTTIAHNLNSTRAFSASALRRY. [4Fe-4S] cluster is bound by residues C341, C347, and C362.

It belongs to the complex I 49 kDa subunit family. In terms of assembly, complex I is composed of about 40 different subunits. [4Fe-4S] cluster is required as a cofactor.

The protein resides in the mitochondrion inner membrane. It catalyses the reaction a ubiquinone + NADH + 5 H(+)(in) = a ubiquinol + NAD(+) + 4 H(+)(out). Its function is as follows. Core subunit of the mitochondrial membrane respiratory chain NADH dehydrogenase (Complex I) that is believed to belong to the minimal assembly required for catalysis. Complex I functions in the transfer of electrons from NADH to the respiratory chain. The immediate electron acceptor for the enzyme is believed to be ubiquinone. The polypeptide is NADH-ubiquinone oxidoreductase 49 kDa subunit, mitochondrial (nuo-49) (Neurospora crassa (strain ATCC 24698 / 74-OR23-1A / CBS 708.71 / DSM 1257 / FGSC 987)).